We begin with the raw amino-acid sequence, 602 residues long: Potassium-transporting ATPase potassium-binding subunit (602 aa).

The next 10 helical transmembrane spans lie at 3–23, 64–84, 135–155, 178–198, 282–302, 313–333, 418–438, 456–476, 522–542, and 565–585; these read ANNL…AVPV, QYAL…YALL, GLTV…LALI, LYVL…QGVI, FSNF…CLVF, VAVL…ETSA, GLYG…LMIG, VSIV…IAVL, WMTA…VLAI, and LFVV…YMPA.

This sequence belongs to the KdpA family. In terms of assembly, the system is composed of three essential subunits: KdpA, KdpB and KdpC.

Its subcellular location is the cell inner membrane. In terms of biological role, part of the high-affinity ATP-driven potassium transport (or Kdp) system, which catalyzes the hydrolysis of ATP coupled with the electrogenic transport of potassium into the cytoplasm. This subunit binds the periplasmic potassium ions and delivers the ions to the membrane domain of KdpB through an intramembrane tunnel. The protein is Potassium-transporting ATPase potassium-binding subunit of Burkholderia pseudomallei (strain K96243).